Here is a 62-residue protein sequence, read N- to C-terminus: DNA gyrase inhibitor YacG (62 aa).

The Zn(2+) site is built by Cys9, Cys12, Cys27, and Cys31. The span at Gly43–Pro52 shows a compositional bias: basic and acidic residues. Positions Gly43–Glu62 are disordered.

Belongs to the DNA gyrase inhibitor YacG family. As to quaternary structure, interacts with GyrB. Requires Zn(2+) as cofactor.

In terms of biological role, inhibits all the catalytic activities of DNA gyrase by preventing its interaction with DNA. Acts by binding directly to the C-terminal domain of GyrB, which probably disrupts DNA binding by the gyrase. The sequence is that of DNA gyrase inhibitor YacG from Geobacter sp. (strain M21).